The chain runs to 100 residues: A-type ATP synthase subunit F (100 aa).

It belongs to the V-ATPase F subunit family. In terms of assembly, has multiple subunits with at least A(3), B(3), C, D, E, F, H, I and proteolipid K(x).

Its subcellular location is the cell membrane. Its function is as follows. Component of the A-type ATP synthase that produces ATP from ADP in the presence of a proton gradient across the membrane. The chain is A-type ATP synthase subunit F from Methanoregula boonei (strain DSM 21154 / JCM 14090 / 6A8).